A 226-amino-acid chain; its full sequence is Nucleoside triphosphate pyrophosphatase (226 aa).

The active-site Proton acceptor is aspartate 79. A disordered region spans residues 204–226 (WSRGTSTHPTPGTSATPKPNPGA). The span at 206-220 (RGTSTHPTPGTSATP) shows a compositional bias: polar residues.

This sequence belongs to the Maf family. A divalent metal cation is required as a cofactor.

It is found in the cytoplasm. It catalyses the reaction a ribonucleoside 5'-triphosphate + H2O = a ribonucleoside 5'-phosphate + diphosphate + H(+). The catalysed reaction is a 2'-deoxyribonucleoside 5'-triphosphate + H2O = a 2'-deoxyribonucleoside 5'-phosphate + diphosphate + H(+). Functionally, nucleoside triphosphate pyrophosphatase. May have a dual role in cell division arrest and in preventing the incorporation of modified nucleotides into cellular nucleic acids. This is Nucleoside triphosphate pyrophosphatase from Salinispora tropica (strain ATCC BAA-916 / DSM 44818 / JCM 13857 / NBRC 105044 / CNB-440).